Here is a 212-residue protein sequence, read N- to C-terminus: uncharacterized protein (212 aa).

It belongs to the flavoredoxin family. The cofactor is FMN.

This is an uncharacterized protein from Methanothermobacter thermautotrophicus (strain ATCC 29096 / DSM 1053 / JCM 10044 / NBRC 100330 / Delta H) (Methanobacterium thermoautotrophicum).